The primary structure comprises 365 residues: Carboxynorspermidine/carboxyspermidine decarboxylase (365 aa).

Lysine 37 is modified (N6-(pyridoxal phosphate)lysine). Positions 233 and 269 each coordinate substrate.

It belongs to the Orn/Lys/Arg decarboxylase class-II family. NspC subfamily. Homodimer. Pyridoxal 5'-phosphate is required as a cofactor.

Its subcellular location is the cytoplasm. The catalysed reaction is carboxynorspermidine + H(+) = norspermidine + CO2. The enzyme catalyses carboxyspermidine + H(+) = spermidine + CO2. Catalyzes the decarboxylation of carboxynorspermidine and carboxyspermidine. The polypeptide is Carboxynorspermidine/carboxyspermidine decarboxylase (Herminiimonas arsenicoxydans).